We begin with the raw amino-acid sequence, 732 residues long: Polyribonucleotide nucleotidyltransferase (732 aa).

Positions 489 and 495 each coordinate Mg(2+). The KH domain occupies 556–615; that stretch reads PKIDTIQIDVDKIKIVIGKGGETIDKIIAETGVKIDIDEEGLVQIFSSDQAAIDRTKEII. Residues 625–693 enclose the S1 motif domain; sequence GEVYHAKVVR…DKGRVDASMK (69 aa). The tract at residues 691-732 is disordered; the sequence is SMKALIPRPPKPEKKEEKASEAKEASNDQASKSQSETASEEK. Positions 700–716 are enriched in basic and acidic residues; that stretch reads PKPEKKEEKASEAKEAS. Residues 717 to 732 are compositionally biased toward polar residues; it reads NDQASKSQSETASEEK.

This sequence belongs to the polyribonucleotide nucleotidyltransferase family. It depends on Mg(2+) as a cofactor.

It localises to the cytoplasm. It catalyses the reaction RNA(n+1) + phosphate = RNA(n) + a ribonucleoside 5'-diphosphate. Functionally, involved in mRNA degradation. Catalyzes the phosphorolysis of single-stranded polyribonucleotides processively in the 3'- to 5'-direction. This chain is Polyribonucleotide nucleotidyltransferase, found in Streptococcus uberis (strain ATCC BAA-854 / 0140J).